We begin with the raw amino-acid sequence, 367 residues long: Peptide chain release factor 2 (367 aa).

An N5-methylglutamine modification is found at Q249.

It belongs to the prokaryotic/mitochondrial release factor family. In terms of processing, methylated by PrmC. Methylation increases the termination efficiency of RF2.

The protein resides in the cytoplasm. In terms of biological role, peptide chain release factor 2 directs the termination of translation in response to the peptide chain termination codons UGA and UAA. The protein is Peptide chain release factor 2 of Thermotoga petrophila (strain ATCC BAA-488 / DSM 13995 / JCM 10881 / RKU-1).